The sequence spans 232 residues: Uracil phosphoribosyltransferase (232 aa).

GTP is bound at residue 38–42 (KGLVK). Residues R87, R112, and 140–148 (DPMIATGST) each bind 5-phospho-alpha-D-ribose 1-diphosphate. Uracil is bound by residues I204 and 209–211 (GDA). 5-phospho-alpha-D-ribose 1-diphosphate is bound at residue D210.

The protein belongs to the UPRTase family. The cofactor is Mg(2+).

The catalysed reaction is UMP + diphosphate = 5-phospho-alpha-D-ribose 1-diphosphate + uracil. It participates in pyrimidine metabolism; UMP biosynthesis via salvage pathway; UMP from uracil: step 1/1. Allosterically activated by GTP. Catalyzes the conversion of uracil and 5-phospho-alpha-D-ribose 1-diphosphate (PRPP) to UMP and diphosphate. In Pyrococcus furiosus (strain ATCC 43587 / DSM 3638 / JCM 8422 / Vc1), this protein is Uracil phosphoribosyltransferase.